Consider the following 305-residue polypeptide: Tyrosine recombinase XerC (305 aa).

Positions 4 to 95 constitute a Core-binding (CB) domain; it reads TSIQELIDKW…AVKNFYRFLE (92 aa). One can recognise a Tyr recombinase domain in the interval 116–298; sequence LLPKALSEDD…SIKHLEAVYT (183 aa). Residues Arg-159, Lys-182, His-250, Arg-253, and His-276 contribute to the active site. Tyr-285 functions as the O-(3'-phospho-DNA)-tyrosine intermediate in the catalytic mechanism.

This sequence belongs to the 'phage' integrase family. XerC subfamily. In terms of assembly, forms a cyclic heterotetrameric complex composed of two molecules of XerC and two molecules of XerD.

It localises to the cytoplasm. Site-specific tyrosine recombinase, which acts by catalyzing the cutting and rejoining of the recombining DNA molecules. The XerC-XerD complex is essential to convert dimers of the bacterial chromosome into monomers to permit their segregation at cell division. It also contributes to the segregational stability of plasmids. This chain is Tyrosine recombinase XerC, found in Rickettsia felis (strain ATCC VR-1525 / URRWXCal2) (Rickettsia azadi).